Here is a 327-residue protein sequence, read N- to C-terminus: Zinc transport protein ZntB (327 aa).

At 1–273 the chain is on the cytoplasmic side; sequence MEAIKGSDVN…ARRTYTMSLM (273 aa). Residues 274-294 traverse the membrane as a helical segment; it reads AMVFLPSTFLTGLFGVNLGGI. The Periplasmic portion of the chain corresponds to 295 to 300; the sequence is PGGGWQ. A helical membrane pass occupies residues 301-321; the sequence is FGFSIFCILLVVLIGGVALWL. Over 322-327 the chain is Cytoplasmic; that stretch reads HRSKWL.

It belongs to the CorA metal ion transporter (MIT) (TC 1.A.35) family.

The protein localises to the cell inner membrane. It catalyses the reaction Zn(2+)(out) + H(+)(out) = Zn(2+)(in) + H(+)(in). Its function is as follows. Zinc transporter. Acts as a Zn(2+):proton symporter, which likely mediates zinc ion uptake. The sequence is that of Zinc transport protein ZntB from Escherichia coli O8 (strain IAI1).